A 621-amino-acid chain; its full sequence is Lamin-C (621 aa).

The tract at residues 1 to 47 (MSARRVTLNTRVSRASTSTPVGGASTSSRVGATSPTSPTRTSRQQEK) is disordered. The tract at residues 1–47 (MSARRVTLNTRVSRASTSTPVGGASTSSRVGATSPTSPTRTSRQQEK) is head. A compositionally biased stretch (polar residues) spans 7–31 (TLNTRVSRASTSTPVGGASTSSRVG). Residues 33 to 42 (TSPTSPTRTS) show a composition bias toward low complexity. Serine 34 is modified (phosphoserine). Residues 46-402 (EKEELQHLND…KLLCGEERRL (357 aa)) enclose the IF rod domain. The tract at residues 47 to 85 (KEELQHLNDRLACYIDRMRNLENENSRLTQELNLAQDTV) is coil 1A. The tract at residues 86-95 (NRETSNLKAV) is linker 1. Residues 96–233 (YEKELAAARK…QVHTQELTET (138 aa)) form a coil 1B region. The interval 234–257 (RSRRQIEISEIDGRLSRQYEAKLQ) is linker 2. The coil 2 stretch occupies residues 258 to 403 (QSLQELRDQY…LLCGEERRLN (146 aa)). Positions 404-458 (IESPGRPTTDSGISSNGSHLTASASSRSGRVTPSGRRSATPGISGSSAVKRRRTV) are disordered. The interval 404-621 (IESPGRPTTD…GVRSLFSLLF (218 aa)) is tail. Serine 406 and serine 441 each carry phosphoserine. Positions 409–450 (RPTTDSGISSNGSHLTASASSRSGRVTPSGRRSATPGISGSS) are enriched in polar residues. Threonine 443 bears the Phosphothreonine mark. Residues 453-458 (KRRRTV) carry the Nuclear localization signal motif. Positions 468 to 582 (SEYSVNAAAK…EDVASYDRVR (115 aa)) constitute an LTD domain. Residues 585–605 (VSSHTSRHRSSGTPSTGFTLG) are disordered.

Belongs to the intermediate filament family. As to quaternary structure, interacts with MAN1. First detected from late stage 12 in the oenocytes, abdominal segments, hindgut and posterior spiracles, with expression increasing in stage 13 (at protein level). In stage 14, also becomes detectable in the foregut (at protein level). Stage 15 shows expression in the epidermis, dorsal longitudinal trunk, pharynx, esophagus and proventriculus, with the dorsal pharyngeal musculature showing expression in late stage 15 (at protein level). In stage 16 embryos, also detected in the exit glia with increasing expression in the somatic musculature (at protein level). Also detected in the visceral mesoderm but not in the midgut or central nervous system until the end of embryogenesis (at protein level). In third instar larvae, detectable at varying levels in all cell types (at protein level). Expressed in spermatocytes (at protein level).

Its subcellular location is the nucleus. It localises to the nucleus lamina. Functionally, lamins are components of the nuclear lamina, a fibrous layer on the nucleoplasmic side of the inner nuclear membrane, which is thought to provide a framework for the nuclear envelope and may also interact with chromatin. In spermatocytes, regulates cytokinesis during meiosis. This Drosophila melanogaster (Fruit fly) protein is Lamin-C (LamC).